A 410-amino-acid polypeptide reads, in one-letter code: Translation initiation factor 2 subunit gamma (410 aa).

The tr-type G domain occupies 9-202 (QAEVNIGMVG…AIEEFIPTPK (194 aa)). The segment at 18–25 (GHVDHGKT) is G1. Mg(2+) is bound by residues aspartate 21, threonine 25, glycine 46, and threonine 48. 21-26 (DHGKTT) serves as a coordination point for GTP. The tract at residues 46–50 (GITIK) is G2. Zn(2+)-binding residues include cysteine 61, cysteine 64, cysteine 73, and cysteine 76. The segment at 90–93 (DAPG) is G3. GTP is bound by residues 145–148 (NKIE) and 180–182 (SAL). A G4 region spans residues 145-148 (NKIE). The tract at residues 180-182 (SAL) is G5.

It belongs to the TRAFAC class translation factor GTPase superfamily. Classic translation factor GTPase family. EIF2G subfamily. In terms of assembly, heterotrimer composed of an alpha, a beta and a gamma chain. Mg(2+) is required as a cofactor.

It catalyses the reaction GTP + H2O = GDP + phosphate + H(+). In terms of biological role, eIF-2 functions in the early steps of protein synthesis by forming a ternary complex with GTP and initiator tRNA. The sequence is that of Translation initiation factor 2 subunit gamma from Thermococcus kodakarensis (strain ATCC BAA-918 / JCM 12380 / KOD1) (Pyrococcus kodakaraensis (strain KOD1)).